The following is a 148-amino-acid chain: Cytochrome c oxidase subunit 6, mitochondrial (148 aa).

Residues 1–40 constitute a mitochondrion transit peptide; sequence MLSRAIFRNPVINRTLLRARPGAYHATRLTKNTFIQSRKY.

Belongs to the cytochrome c oxidase subunit 5A family. Component of the cytochrome c oxidase (complex IV, CIV), a multisubunit enzyme composed of 12 subunits. The complex is composed of a catalytic core of 3 subunits COX1, COX2 and COX3, encoded in the mitochondrial DNA, and 9 supernumerary subunits COX4, COX5A (or COX5B), COX6, COX7, COX8, COX9, COX12, COX13 and COX26, which are encoded in the nuclear genome. The complex exists as a monomer or a dimer and forms supercomplexes (SCs) in the inner mitochondrial membrane with a dimer of ubiquinol-cytochrome c oxidoreductase (cytochrome b-c1 complex, complex III, CIII), resulting in 2 different assemblies (supercomplexes III(2)IV and III(2)IV(2)). COX26 interacts with COX1, COX2, COX6 and COX9.

It localises to the mitochondrion inner membrane. It functions in the pathway energy metabolism; oxidative phosphorylation. In terms of biological role, component of the cytochrome c oxidase, the last enzyme in the mitochondrial electron transport chain which drives oxidative phosphorylation. The respiratory chain contains 3 multisubunit complexes succinate dehydrogenase (complex II, CII), ubiquinol-cytochrome c oxidoreductase (cytochrome b-c1 complex, complex III, CIII) and cytochrome c oxidase (complex IV, CIV), that cooperate to transfer electrons derived from NADH and succinate to molecular oxygen, creating an electrochemical gradient over the inner membrane that drives transmembrane transport and the ATP synthase. Cytochrome c oxidase is the component of the respiratory chain that catalyzes the reduction of oxygen to water. Electrons originating from reduced cytochrome c in the intermembrane space (IMS) are transferred via the dinuclear copper A center (CU(A)) of COX2 and heme A of COX1 to the active site in COX1, a binuclear center (BNC) formed by heme A3 and copper B (CU(B)). The BNC reduces molecular oxygen to 2 water molecules using 4 electrons from cytochrome c in the IMS and 4 protons from the mitochondrial matrix. COX6 may stabilize the region of CIV at the interface with CIII, supporting a role in formation or stability of the CIII(2)IV(2) SC. The protein is Cytochrome c oxidase subunit 6, mitochondrial (COX6) of Saccharomyces cerevisiae (strain ATCC 204508 / S288c) (Baker's yeast).